Here is a 272-residue protein sequence, read N- to C-terminus: Glucosyl-3-phosphoglycerate/mannosyl-3-phosphoglycerate phosphatase (272 aa).

The active-site Nucleophile is Asp-8. 3 residues coordinate Mg(2+): Asp-8, Asp-10, and Asp-214.

It belongs to the HAD-like hydrolase superfamily. MPGP family. Monomer. Co(2+) is required as a cofactor. It depends on Mg(2+) as a cofactor. The cofactor is Ni(2+).

The enzyme catalyses (2R)-2-O-(alpha-D-glucopyranosyl)-3-phospho-glycerate + H2O = (2R)-2-O-(alpha-D-glucopyranosyl)-glycerate + phosphate. It carries out the reaction 2-O-(alpha-D-mannosyl)-3-phosphoglycerate + H2O = (2R)-2-O-(alpha-D-mannosyl)-glycerate + phosphate. In terms of biological role, involved in the biosynthesis of glucosylglycerate. Catalyzes the dephosphorylation of glucosyl-3-phosphoglycerate (GPG) and mannosyl-3-phosphoglycerate (MPG) to glucosylglycerate (GG) and mannosylglycerate (MG), respectively. The sequence is that of Glucosyl-3-phosphoglycerate/mannosyl-3-phosphoglycerate phosphatase from Methanococcoides burtonii (strain DSM 6242 / NBRC 107633 / OCM 468 / ACE-M).